The chain runs to 111 residues: uncharacterized protein (111 aa).

This is an uncharacterized protein from Microplitis demolitor bracovirus (isolate Webb) (MdBV).